The following is a 376-amino-acid chain: Protein-glutamate methylesterase/protein-glutamine glutaminase 1 (376 aa).

In terms of domain architecture, Response regulatory spans 4–121 (KVLVVDDSSF…ARNRDEAVSL (118 aa)). Asp55 bears the 4-aspartylphosphate mark. The tract at residues 138 to 169 (RPVASSTPVQERPQSTLNRPTTGLRREASAQA) is disordered. The segment covering 141–158 (ASSTPVQERPQSTLNRPT) has biased composition (polar residues). Positions 183 to 376 (SGKKYQLTAI…ERMLVEVGLA (194 aa)) constitute a CheB-type methylesterase domain. Residues Ser195, His222, and Asp318 contribute to the active site.

This sequence belongs to the CheB family. In terms of processing, phosphorylated by CheA. Phosphorylation of the N-terminal regulatory domain activates the methylesterase activity.

It is found in the cytoplasm. The catalysed reaction is [protein]-L-glutamate 5-O-methyl ester + H2O = L-glutamyl-[protein] + methanol + H(+). It carries out the reaction L-glutaminyl-[protein] + H2O = L-glutamyl-[protein] + NH4(+). In terms of biological role, involved in chemotaxis. Part of a chemotaxis signal transduction system that modulates chemotaxis in response to various stimuli. Catalyzes the demethylation of specific methylglutamate residues introduced into the chemoreceptors (methyl-accepting chemotaxis proteins or MCP) by CheR. Also mediates the irreversible deamidation of specific glutamine residues to glutamic acid. The polypeptide is Protein-glutamate methylesterase/protein-glutamine glutaminase 1 (Vibrio vulnificus (strain YJ016)).